The following is a 274-amino-acid chain: Diaminopimelate epimerase (274 aa).

Substrate-binding residues include Asn-11, Gln-44, and Asn-64. Cys-73 serves as the catalytic Proton donor. Substrate-binding positions include 74–75 (GN), Asn-157, Asn-190, and 208–209 (ER). Residue Cys-217 is the Proton acceptor of the active site. 218–219 (GS) contributes to the substrate binding site.

This sequence belongs to the diaminopimelate epimerase family. As to quaternary structure, homodimer.

The protein resides in the cytoplasm. The enzyme catalyses (2S,6S)-2,6-diaminopimelate = meso-2,6-diaminopimelate. It functions in the pathway amino-acid biosynthesis; L-lysine biosynthesis via DAP pathway; DL-2,6-diaminopimelate from LL-2,6-diaminopimelate: step 1/1. Functionally, catalyzes the stereoinversion of LL-2,6-diaminopimelate (L,L-DAP) to meso-diaminopimelate (meso-DAP), a precursor of L-lysine and an essential component of the bacterial peptidoglycan. This is Diaminopimelate epimerase from Haemophilus influenzae (strain PittEE).